The chain runs to 374 residues: 4-galactosyl-N-acetylglucosaminide 3-alpha-L-fucosyltransferase FUT5 (374 aa).

Over 1 to 15 (MDPLGPAKPQWLWRR) the chain is Cytoplasmic. The chain crosses the membrane as a helical; Signal-anchor for type II membrane protein span at residues 16–34 (CLAGLLFQLLVAVCFFSYL). Residues 35 to 374 (RVSRDDATGS…TVRSIAAWFT (340 aa)) are Lumenal-facing. Residues asparagine 60, asparagine 105, asparagine 167, and asparagine 198 are each glycosylated (N-linked (GlcNAc...) asparagine).

Belongs to the glycosyltransferase 10 family. Liver, colon and testis and trace amounts in T-cells and brain.

It localises to the golgi apparatus. The protein localises to the golgi stack membrane. The enzyme catalyses a beta-D-galactosyl-(1-&gt;3)-N-acetyl-beta-D-glucosaminyl derivative + GDP-beta-L-fucose = a beta-D-galactosyl-(1-&gt;3)-[alpha-L-fucosyl-(1-&gt;4)]-N-acetyl-beta-D-glucosaminyl derivative + GDP + H(+). It catalyses the reaction an N-acetyl-alpha-neuraminyl-(2-&gt;3)-beta-D-galactosyl-(1-&gt;4)-N-acetyl-beta-D-glucosaminyl derivative + GDP-beta-L-fucose = an alpha-Neu5Ac-(2-&gt;3)-beta-D-Gal-(1-&gt;4)-[alpha-L-Fuc-(1-&gt;3)]-beta-D-GlcNAc derivative + GDP + H(+). It carries out the reaction an alpha-Neu5Ac-(2-&gt;3)-beta-D-Gal-(1-&gt;4)-beta-D-GlcNAc-(1-&gt;3)-beta-D-Gal-(1-&gt;4)-[alpha-L-Fuc-(1-&gt;3)]-beta-D-GlcNAc derivative + GDP-beta-L-fucose = an alpha-Neu5Ac-(2-&gt;3)-beta-D-Gal-(1-&gt;4)-[alpha-L-Fuc-(1-&gt;3)]-beta-D-GlcNAc-(1-&gt;3)-beta-D-Gal-(1-&gt;4)-[alpha-L-Fuc-(1-&gt;3)]-beta-D-GlcNAc derivative + GDP + H(+). The catalysed reaction is a beta-D-galactosyl-(1-&gt;4)-N-acetyl-beta-D-glucosaminyl derivative + GDP-beta-L-fucose = a beta-D-galactosyl-(1-&gt;4)-[alpha-L-fucosyl-(1-&gt;3)]-N-acetyl-beta-D-glucosaminyl derivative + GDP + H(+). The enzyme catalyses a neolactoside nLc4Cer + GDP-beta-L-fucose = a neolactoside III(3)-alpha-Fuc-nLc4Cer + GDP + H(+). It catalyses the reaction a neolactoside nLc6Cer + GDP-beta-L-fucose = beta-D-galactosyl-(1-&gt;4)-N-acetyl-beta-D-glucosaminyl-(1-&gt;3)-beta-D-galactosyl-(1-&gt;4)-[alpha-L-fucosyl-(1-&gt;3)]-N-acetyl-beta-D-glucosaminyl-(1-&gt;3)-beta-D-galactosyl-(1-&gt;4)-beta-D-glucosyl-(1&lt;-&gt;1')-ceramide + GDP + H(+). It carries out the reaction a neolactoside nLc6Cer(d18:1(4E)) + GDP-beta-L-fucose = a neolactoside III(3)-alpha-Fuc-nLc6Cer(d18:1(4E)) + GDP + H(+). The catalysed reaction is a neolactoside nLc4Cer(d18:1(4E)) + GDP-beta-L-fucose = a neolactoside III(3)-alpha-Fuc-nLc4Cer(d18:1(4E)) + GDP + H(+). The enzyme catalyses a neolactoside VI(3)-alpha-NeuNAc-nLc6Cer + GDP-beta-L-fucose = a neolactoside VI(3)-alpha-NeuAc,III(3)-alphaFuc-nLc6Cer + GDP + H(+). It catalyses the reaction beta-D-galactosyl-(1-&gt;4)-N-acetyl-D-glucosamine + GDP-beta-L-fucose = beta-D-galactosyl-(1-&gt;4)-[alpha-L-fucosyl-(1-&gt;3)]-N-acetyl-D-glucosamine + GDP + H(+). It carries out the reaction N-acetyl-alpha-neuraminosyl-(2-&gt;3)-beta-D-galactosyl-(1-&gt;4)-N-acetyl-beta-D-glucosamine + GDP-beta-L-fucose = N-acetyl-alpha-neuraminosyl-(2-&gt;3)-beta-D-galactosyl-(1-&gt;4)-[alpha-L-fucosyl-(1-&gt;3)]-N-acetyl-beta-D-glucosamine + GDP + H(+). The catalysed reaction is alpha-L-Fuc-(1-&gt;2)-beta-D-Gal-(1-&gt;4)-D-GlcNAc + GDP-beta-L-fucose = alpha-L-Fuc-(1-&gt;2)-beta-D-Gal-(1-&gt;4)-[alpha-L-Fuc-(1-&gt;3)]-D-GlcNAc + GDP + H(+). The enzyme catalyses an alpha-Neu5Ac-(2-&gt;3)-beta-D-Gal-(1-&gt;3)-D-GlcNAc derivative + GDP-beta-L-fucose = an alpha-Neu5Ac-(2-&gt;3)-beta-D-Gal-(1-&gt;3)-[alpha-L-Fuc-(1-&gt;4)]-beta-D-GlcNAc derivative + GDP + H(+). The protein operates within protein modification; protein glycosylation. In terms of biological role, catalyzes preferentially the transfer of L-fucose, from a guanosine diphosphate-beta-L-fucose, to the N-acetyl-beta-D-glucosamine (GlcNAc) of an N-acetyllactosamine unit (type 2 chain) of an oligosaccharide, or a glycoprotein- and a glycolipid-linked N-acetyllactosamine unit via an alpha (1,3) linkage and participates in the surface expression of VIM-2, Lewis X/SSEA-1 and sialyl Lewis X antigens. Preferentially transfers fucose to the GlcNAc of an internal N-acetyllactosamine unit of a poly-N-acetyllactosamine chain acceptor substrate. Also catalyzes to a lesser extend the transfer of L-fucose to the GlcNAc of a type 1 (beta-D-galactosyl-(1-&gt;3)-N-acetyl-beta-D-glucosaminyl) or H-type 1 (alpha-L-Fuc-(1-&gt;2)-beta-D-Gal-(1-&gt;3)-D-GlcNAc) chain oligosaccharide via an alpha (1,4) linkage. Preferentially catalyzes sialylated type 2 oligosaccharide acceptors over neutral type 2 or H type 2 (alpha-L-Fuc-(1-&gt;2)-beta-D-Gal-(1-&gt;4)-D-GlcNAc) oligosaccharide acceptors. Lactose-based structures are also acceptor substrates. In Homo sapiens (Human), this protein is 4-galactosyl-N-acetylglucosaminide 3-alpha-L-fucosyltransferase FUT5.